The sequence spans 458 residues: Exodeoxyribonuclease 7 large subunit (458 aa).

This sequence belongs to the XseA family. As to quaternary structure, heterooligomer composed of large and small subunits.

The protein localises to the cytoplasm. The enzyme catalyses Exonucleolytic cleavage in either 5'- to 3'- or 3'- to 5'-direction to yield nucleoside 5'-phosphates.. Its function is as follows. Bidirectionally degrades single-stranded DNA into large acid-insoluble oligonucleotides, which are then degraded further into small acid-soluble oligonucleotides. This Sodalis glossinidius (strain morsitans) protein is Exodeoxyribonuclease 7 large subunit.